The sequence spans 207 residues: MSFNDTQEQFAPNMALVPMVIEQTSRGERSYDIYSRLLKERIIFLTGQVEDHMANLIVAQMLFLEAENPEKDINLYINSPGGVITAGMSIYDTMQYIKADVSTICMGQACSMGAFLLSAGAKGKRICLPNSRVMIHQPLGGYQGQATDIQIHAQEILKVKSRMNELMAQHTGKSIEEIERDTERDRFLSANEALEYGLVDKVYTQRS.

Catalysis depends on Ser111, which acts as the Nucleophile. His136 is an active-site residue.

Belongs to the peptidase S14 family. As to quaternary structure, fourteen ClpP subunits assemble into 2 heptameric rings which stack back to back to give a disk-like structure with a central cavity, resembling the structure of eukaryotic proteasomes.

The protein resides in the cytoplasm. It carries out the reaction Hydrolysis of proteins to small peptides in the presence of ATP and magnesium. alpha-casein is the usual test substrate. In the absence of ATP, only oligopeptides shorter than five residues are hydrolyzed (such as succinyl-Leu-Tyr-|-NHMec, and Leu-Tyr-Leu-|-Tyr-Trp, in which cleavage of the -Tyr-|-Leu- and -Tyr-|-Trp bonds also occurs).. In terms of biological role, cleaves peptides in various proteins in a process that requires ATP hydrolysis. Has a chymotrypsin-like activity. Plays a major role in the degradation of misfolded proteins. The protein is ATP-dependent Clp protease proteolytic subunit of Proteus mirabilis (strain HI4320).